Reading from the N-terminus, the 494-residue chain is Alpha-amylase-related protein (494 aa).

The first 20 residues, 1 to 20 (MFKFAAAVILCLVAASSTLA), serve as a signal peptide directing secretion. At Gln-21 the chain carries Pyrrolidone carboxylic acid. An intrachain disulfide couples Cys-48 to Cys-104. 3 residues coordinate Ca(2+): Asn-118, Gln-169, and Asp-178. A disulfide bond links Cys-157 and Cys-171. Arg-206 is a chloride binding site. The active-site Nucleophile is Asp-208. His-212 is a binding site for Ca(2+). Glu-245 (proton donor) is an active-site residue. Chloride contacts are provided by Asn-308 and Arg-343. Disulfide bonds link Cys-376–Cys-382, Cys-418–Cys-441, and Cys-448–Cys-460.

It belongs to the glycosyl hydrolase 13 family. In terms of assembly, monomer. The cofactor is Ca(2+). Chloride is required as a cofactor.

It is found in the secreted. It carries out the reaction Endohydrolysis of (1-&gt;4)-alpha-D-glucosidic linkages in polysaccharides containing three or more (1-&gt;4)-alpha-linked D-glucose units.. This Drosophila atripex (Fruit fly) protein is Alpha-amylase-related protein (Amyrel).